Here is a 166-residue protein sequence, read N- to C-terminus: Large ribosomal subunit protein uL10 (166 aa).

The protein belongs to the universal ribosomal protein uL10 family. Part of the ribosomal stalk of the 50S ribosomal subunit. The N-terminus interacts with L11 and the large rRNA to form the base of the stalk. The C-terminus forms an elongated spine to which L12 dimers bind in a sequential fashion forming a multimeric L10(L12)X complex.

Its function is as follows. Forms part of the ribosomal stalk, playing a central role in the interaction of the ribosome with GTP-bound translation factors. The protein is Large ribosomal subunit protein uL10 of Phytoplasma australiense.